Consider the following 353-residue polypeptide: Photosystem II D2 protein (353 aa).

Thr2 is modified (N-acetylthreonine). At Thr2 the chain carries Phosphothreonine. A helical transmembrane segment spans residues Cys41–Thr61. His118 serves as a coordination point for chlorophyll a. The chain crosses the membrane as a helical span at residues Gly125–Pro141. 2 residues coordinate pheophytin a: Gln130 and Asn143. A helical transmembrane segment spans residues Val153–Ser166. Position 198 (His198) interacts with chlorophyll a. The chain crosses the membrane as a helical span at residues Ala208–Asp228. Residues His215 and Phe262 each coordinate a plastoquinone. Residue His215 coordinates Fe cation. His269 contacts Fe cation. The chain crosses the membrane as a helical span at residues Gly279–Arg295.

Belongs to the reaction center PufL/M/PsbA/D family. PSII is composed of 1 copy each of membrane proteins PsbA, PsbB, PsbC, PsbD, PsbE, PsbF, PsbH, PsbI, PsbJ, PsbK, PsbL, PsbM, PsbT, PsbX, PsbY, PsbZ, Psb30/Ycf12, at least 3 peripheral proteins of the oxygen-evolving complex and a large number of cofactors. It forms dimeric complexes. Requires The D1/D2 heterodimer binds P680, chlorophylls that are the primary electron donor of PSII, and subsequent electron acceptors. It shares a non-heme iron and each subunit binds pheophytin, quinone, additional chlorophylls, carotenoids and lipids. There is also a Cl(-1) ion associated with D1 and D2, which is required for oxygen evolution. The PSII complex binds additional chlorophylls, carotenoids and specific lipids. as cofactor.

The protein resides in the plastid. It is found in the chloroplast thylakoid membrane. The enzyme catalyses 2 a plastoquinone + 4 hnu + 2 H2O = 2 a plastoquinol + O2. Functionally, photosystem II (PSII) is a light-driven water:plastoquinone oxidoreductase that uses light energy to abstract electrons from H(2)O, generating O(2) and a proton gradient subsequently used for ATP formation. It consists of a core antenna complex that captures photons, and an electron transfer chain that converts photonic excitation into a charge separation. The D1/D2 (PsbA/PsbD) reaction center heterodimer binds P680, the primary electron donor of PSII as well as several subsequent electron acceptors. D2 is needed for assembly of a stable PSII complex. The protein is Photosystem II D2 protein of Cycas taitungensis (Prince sago).